A 159-amino-acid polypeptide reads, in one-letter code: Ubiquitin-conjugating enzyme E2 variant 1B (159 aa).

In terms of domain architecture, UBC core spans 11–159 (PRNFRLLEEL…KGLVVKCCVM (149 aa)).

The protein belongs to the ubiquitin-conjugating enzyme family. As to quaternary structure, heterodimer with UBC35 or UBC36. In terms of tissue distribution, expressed in roots, shoots, leaves, stems and flowers, but not in pollen.

Functionally, has no ubiquitin ligase activity on its own. The heterodimer with UBC catalyzes the synthesis of non-canonical poly-ubiquitin chains that are linked through 'Lys-63'. This type of poly-ubiquitination does not lead to protein degradation by the proteasome. Mediates transcriptional activation of target genes. May play a role in the control of progress through the cell cycle and differentiation. May play a role in the error-free DNA repair pathway and contributes to the survival of cells after DNA damage. The polypeptide is Ubiquitin-conjugating enzyme E2 variant 1B (UEV1B) (Arabidopsis thaliana (Mouse-ear cress)).